We begin with the raw amino-acid sequence, 407 residues long: Putative glycosyltransferase YtcC (407 aa).

It belongs to the glycosyltransferase group 1 family. Glycosyltransferase 4 subfamily.

The protein is Putative glycosyltransferase YtcC (ytcC) of Bacillus subtilis (strain 168).